Reading from the N-terminus, the 408-residue chain is Pleckstrin homology domain-containing family O member 1 (408 aa).

The segment at 1-21 (MKKSGSGKRGPPDGNHQSAAP) is disordered. The PH domain occupies 20–131 (APEKVGWVRK…WINALSSAIT (112 aa)). An interaction with capping proteins (CPs) region spans residues 132–192 (RAKNRILDEV…MLTLDLIQEE (61 aa)). Residues 135 to 307 (NRILDEVTVE…PAQPGQLSRI (173 aa)) form an interaction with ATM, CKIP, IFP35 and NMI region. The disordered stretch occupies residues 217–264 (LAGSRRRADSDRIQPSSQRASSLSRPWEKPDKGAPYTPQALKKFPSTE). Serine 226 carries the phosphoserine modification. Over residues 229-240 (IQPSSQRASSLS) the composition is skewed to polar residues. Phosphoserine occurs at positions 270 and 341. The negative regulator of AP-1 activity stretch occupies residues 307–408 (IQDLVARKLE…QHSQYRKSLM (102 aa)). Disordered stretches follow at residues 325–348 (VQGL…SESE) and 389–408 (TPDS…KSLM). Positions 389–401 (TPDSHLRQTSQHS) are enriched in polar residues.

In terms of assembly, heterodimer or homodimer. Interacts with CK2 and actin capping subunits (capping protein CP-alpha and CP-beta). CKIP1 and CK2 together inhibit the activity of actin capping protein at the barbed ends of actin filaments. Interacts with ATM, IFP35, JUN, JUND, NMI and PI3K. Interacts with AKT1, AKT2 and AKT3 (each isozyme of PKB), PtdIns(3,5)P2, PtdIns(4,5)P2 and PtdIns(3,4,5)P2. In terms of processing, C-terminal fragments could be released during apoptosis via caspase-3-dependent cleavage.

The protein localises to the cell membrane. It is found in the nucleus. Its subcellular location is the cytoplasm. In terms of biological role, plays a role in the regulation of the actin cytoskeleton through its interactions with actin capping protein (CP). May function to target CK2 to the plasma membrane thereby serving as an adapter to facilitate the phosphorylation of CP by protein kinase 2 (CK2). Appears to target ATM to the plasma membrane. Appears to also inhibit tumor cell growth by inhibiting AKT-mediated cell-survival. Also implicated in PI3K-regulated muscle differentiation, the regulation of AP-1 activity (plasma membrane bound AP-1 regulator that translocates to the nucleus) and the promotion of apoptosis induced by tumor necrosis factor TNF. When bound to PKB, it inhibits it probably by decreasing PKB level of phosphorylation. This chain is Pleckstrin homology domain-containing family O member 1 (Plekho1), found in Mus musculus (Mouse).